A 255-amino-acid chain; its full sequence is uncharacterized protein (255 aa).

This sequence belongs to the methyltransferase superfamily.

This is an uncharacterized protein from Mycolicibacterium paratuberculosis (strain ATCC BAA-968 / K-10) (Mycobacterium paratuberculosis).